The following is a 266-amino-acid chain: MVCLCFLGGSWMTALMLILMVLNPPFAWARDTPPHFLEVAKSECYFTNGTERVRFVERYIHNREEFVRFDSDVGEFRAVTELGRPVAESWNGQKEILEQERATVDTYCRHNYGVIESFTVQRRVEPTVTVYPTKTQTLQHHNLLVCSVNGFYPGHIEVRWLRNGQEEEAGVVSTGLIRNGDWTFQILVMLEIVPQSGEVYTCQVEHPSLTSPVTVEWRAQSDSAQSKMLSGIGGFVLGLLFLAVGLFIYFRNQKGHSGLQPTGLLS.

The first 29 residues, 1 to 29, serve as a signal peptide directing secretion; sequence MVCLCFLGGSWMTALMLILMVLNPPFAWA. The beta-1 stretch occupies residues 30-124; it reads RDTPPHFLEV…IESFTVQRRV (95 aa). Over 30–227 the chain is Extracellular; sequence RDTPPHFLEV…RAQSDSAQSK (198 aa). 2 disulfides stabilise this stretch: Cys44–Cys108 and Cys146–Cys202. N-linked (GlcNAc...) asparagine glycosylation occurs at Asn48. The beta-2 stretch occupies residues 125-227; that stretch reads EPTVTVYPTK…RAQSDSAQSK (103 aa). An Ig-like C1-type domain is found at 126 to 214; it reads PTVTVYPTKT…EHPSLTSPVT (89 aa). Residues 228–250 traverse the membrane as a helical segment; that stretch reads MLSGIGGFVLGLLFLAVGLFIYF. At 251-266 the chain is on the cytoplasmic side; it reads RNQKGHSGLQPTGLLS.

The protein belongs to the MHC class II family.

It is found in the membrane. In Canis lupus familiaris (Dog), this protein is DLA class II histocompatibility antigen, DR-1 beta chain.